Reading from the N-terminus, the 614-residue chain is Chaperone protein DnaK (614 aa).

Phosphothreonine; by autocatalysis is present on Thr174. Residues 576 to 614 (QTGGAAPGPDMGADPGAGGAQGDDNVVDAEYTEVDKDQK) are disordered. The span at 578–589 (GGAAPGPDMGAD) shows a compositional bias: low complexity.

The protein belongs to the heat shock protein 70 family.

In terms of biological role, acts as a chaperone. This chain is Chaperone protein DnaK, found in Desulfitobacterium hafniense (strain DSM 10664 / DCB-2).